The primary structure comprises 413 residues: Large ribosomal subunit protein uL4 (413 aa).

The residue at position 2 (Ala-2) is an N-acetylalanine. The residue at position 14 (Lys-14) is an N6-acetyllysine. The residue at position 97 (Arg-97) is an Omega-N-methylarginine. Residue Lys-106 is modified to N6-acetyllysine. Lys-239 is covalently cross-linked (Glycyl lysine isopeptide (Lys-Gly) (interchain with G-Cter in SUMO2)). Lys-259 is subject to N6-acetyllysine. Thr-266 carries the phosphothreonine modification. Phosphoserine is present on residues Ser-290 and Ser-295. Arg-300 is modified (citrulline). Lys-327 is covalently cross-linked (Glycyl lysine isopeptide (Lys-Gly) (interchain with G-Cter in SUMO2)). Lys-333 is modified (N6-acetyllysine). Positions 355 to 413 (AAALAAKSDPKEAPAKKKPVVGKKKKPVVGRKAAAAKKPAADKKAADKRAGPEDKKPAA) are disordered. Position 361 is an N6-acetyllysine; alternate (Lys-361). A Glycyl lysine isopeptide (Lys-Gly) (interchain with G-Cter in SUMO1); alternate cross-link involves residue Lys-361. A Phosphoserine modification is found at Ser-362. The span at 370–383 (KKKPVVGKKKKPVV) shows a compositional bias: basic residues. Positions 393-413 (PAADKKAADKRAGPEDKKPAA) are enriched in basic and acidic residues.

Belongs to the universal ribosomal protein uL4 family. As to quaternary structure, component of the large ribosomal subunit. May bind IPO9 with low affinity. Interacts with RBM3. In terms of processing, citrullinated by PADI4.

The protein localises to the cytoplasm. In terms of biological role, component of the large ribosomal subunit. The ribosome is a large ribonucleoprotein complex responsible for the synthesis of proteins in the cell. In Oryctolagus cuniculus (Rabbit), this protein is Large ribosomal subunit protein uL4 (RPL4).